A 1469-amino-acid chain; its full sequence is snRNA-activating protein complex subunit 4 (1469 aa).

The segment at 16 to 82 is disordered; that stretch reads ELERILDPGS…DPKDKTLPED (67 aa). The span at 24–36 shows a compositional bias: low complexity; that stretch reads GSSGSHVEISESS. Over residues 37-53 the composition is skewed to acidic residues; it reads LESDSEADSLPSEDLDP. Ser68 carries the phosphoserine modification. Residues 84 to 133 form an SNAPC5-binding region; the sequence is ETCLQLNMVYQEVIQEKLAEANLLLAQNREQQEELMRDLAGSKGTKVKDG. The Myb-like 1 domain maps to 250–288; it reads EEALLGNRLDSHDWEKISNINFEGSRSAEEIRKFWQNSE. Positions 289–343 constitute an HTH myb-type 1 domain; sequence HPSINKQEWSREEEERLQAIAAAHGHLEWQKIAEELGTSRSAFQCLQKFQQHNKA. Residues 317–341 constitute a DNA-binding region (H-T-H motif); sequence WQKIAEELGTSRSAFQCLQKFQQHN. A Myb-like 2 domain is found at 344-395; that stretch reads LKRKEWTEEEDRMLTQLVQEMRVGSHIPYRRIVYYMEGRDSMQLIYRWTKSL. HTH myb-type domains follow at residues 396 to 451 and 452 to 503; these read DPGL…HFSL and KKGR…GKKQ. 2 consecutive DNA-binding regions (H-T-H motif) follow at residues 424 to 447 and 476 to 499; these read WFKIREEVPGRSDAQCRDRYLRRL and WAKIASELPHRSGSQCLSKWKIMM. 8 disordered regions span residues 501 to 558, 577 to 661, 685 to 710, 834 to 894, 932 to 981, 1001 to 1051, 1121 to 1167, and 1184 to 1266; these read KKQG…GDRA, QSTS…QALE, RSCTQKEQLRQPPLPTSSPGVSSGDS, ASSS…KTVS, PLPH…DKRL, PAAS…PSPT, AAQG…PAEA, and IPEP…GPEK. Residues 503-516 are compositionally biased toward basic residues; the sequence is QGLRRRRRRARHSV. Low complexity predominate over residues 519–541; that stretch reads SSTSSSGSSSGSSGGSSSSSSSS. The residue at position 599 (Ser599) is a Phosphoserine. Residues 602–618 show a composition bias toward polar residues; it reads KGSSASQGGSKEASTTA. The residue at position 626 (Ser626) is a Phosphoserine. Pro residues predominate over residues 932-944; sequence PLPHTPHGRPAPG. The segment covering 951 to 968 has biased composition (low complexity); the sequence is PLSGPGAPAAAKPGTSGS. Polar residues predominate over residues 1014–1029; sequence ISVSCPESGLGQSQAP. Positions 1039 to 1051 are enriched in pro residues; that stretch reads EAPPFLPAAPSPT. Thr1157 carries the phosphothreonine modification. Over residues 1184–1195 the composition is skewed to basic and acidic residues; the sequence is IPEPRTSSHADP. A Phosphoserine modification is found at Ser1224. The interval 1281 to 1393 is SNAPC2-binding; that stretch reads ATQQWLGGQR…QGVRTTLSVP (113 aa). Phosphoserine occurs at positions 1398, 1400, and 1440. Residues 1430 to 1449 are disordered; sequence APDSGKCSASSCLDTSNDPD. Positions 1436–1445 are enriched in polar residues; the sequence is CSASSCLDTS.

In terms of assembly, part of the SNAPc complex composed of 5 subunits: SNAPC1, SNAPC2, SNAPC3, SNAPC4 and SNAPC5. SNAPC4 interacts with SNAPC1, SNAPC2, SNAPC5, BRF2 and TBP.

It is found in the nucleus. Functionally, part of the SNAPc complex required for the transcription of both RNA polymerase II and III small-nuclear RNA genes. Binds to the proximal sequence element (PSE), a non-TATA-box basal promoter element common to these 2 types of genes. Recruits TBP and BRF2 to the U6 snRNA TATA box. This chain is snRNA-activating protein complex subunit 4, found in Homo sapiens (Human).